The chain runs to 346 residues: PPE family protein PPE17 (346 aa).

The tract at residues 6 to 159 (FPPEFNSLNI…LYATMAAAAA (154 aa)) is PPE.

Belongs to the mycobacterial PPE family. In terms of assembly, interacts with LRR motifs 15-20 of host Toll-like receptor 2 (TLR2).

The protein resides in the secreted. The protein localises to the cell wall. Its subcellular location is the cell surface. Its function is as follows. Induces pro-inflammatory responses. Induces host TLR1/2 heterodimerization, which causes an increased recruitment of IRAK1, MYD88, and protein kinase C epsilon (PRKCE) to the downstream TLR-signaling complex that translocates PRKCE into the nucleus in an IRAK1-dependent manner. PRKCE-mediated phosphorylation allowed the nuclear IRAK3 to be exported to the cytoplasm, leading to increased activation of ERK1/2, stabilization of MAPK phosphatase 1 (MKP1), and induction of TNF-alpha with concomitant down-regulation of MAP kinase p38. Functionally, during M.tuberculosis and HIV-1 co-infection, can stimulate transcription from the long terminal repeat (LTR) of HIV-1 in monocyte/macrophage cells. Interaction with human TLR2 activates the NF-kappa-B transcription factor, which binds to the promoter region of the HIV-1 and induces HIV-1 gene expression. This chain is PPE family protein PPE17 (PPE17), found in Mycobacterium tuberculosis (strain ATCC 25618 / H37Rv).